Reading from the N-terminus, the 946-residue chain is Altered inheritance of mitochondria protein 3 (946 aa).

Disordered regions lie at residues 1–333 (MGFW…PQMN) and 351–903 (MSST…KSLE). The span at 36-54 (ASKKHYNNSKARRERKSGK) shows a compositional bias: basic residues. Ser57, Ser58, and Ser64 each carry phosphoserine. A compositionally biased stretch (acidic residues) spans 59–68 (DEEYESEDEM). Over residues 69–84 (EHERKPTDIRSLKDPK) the composition is skewed to basic and acidic residues. Composition is skewed to low complexity over residues 93-105 (PGQKTYTGQQQQQ) and 130-158 (QSQYAQPQYNQYPQQQLQQGVVPQQPPIY). Polar residues predominate over residues 166–244 (GSNSNATSYQ…YVSHGSTNLG (79 aa)). Composition is skewed to low complexity over residues 245–267 (QSQFPSGQQQQPTTQFGQQVLPS) and 306–320 (QQQQQQQQQQQQQQQ). Over residues 351–364 (MSSTTNMQDSNPSY) the composition is skewed to polar residues. Positions 376–392 (GGQPPVPVRMQPQPPQP) are enriched in pro residues. Residues 463 to 472 (IQPNTTSSAA) show a composition bias toward polar residues. Residue Ser473 is modified to Phosphoserine. Basic and acidic residues-rich tracts occupy residues 485–499 (DNERNSGNKENDEST), 523–538 (HGLDSVPSEHTRKNAS), and 608–625 (EIKDEVLPGHPSEEDRNV). Low complexity-rich tracts occupy residues 627-642 (PSLLPQSKPQSQSQSQ) and 666-675 (SQSSNSSDSS). Thr728 carries the phosphothreonine modification. A compositionally biased stretch (basic and acidic residues) spans 748-758 (DSSKDANKYEK). A compositionally biased stretch (polar residues) spans 762–773 (PVTSSIQAQQST). Thr860 carries the post-translational modification Phosphothreonine. A compositionally biased stretch (pro residues) spans 861-878 (PPRPPPSRSSPKKVPPVV). Basic residues predominate over residues 887–898 (KKPPVVPKKKPL).

It belongs to the AIM3 family. In terms of assembly, interacts with RVS167.

The protein localises to the membrane raft. This Saccharomyces cerevisiae (strain Lalvin EC1118 / Prise de mousse) (Baker's yeast) protein is Altered inheritance of mitochondria protein 3 (AIM3).